The chain runs to 558 residues: Pyrethroid hydrolase Ces2a (558 aa).

A signal peptide spans 1-26 (MPLARLPGWLCVVACGLLLLLQHVHG). Cys95 and Cys122 are joined by a disulfide. An N6-succinyllysine modification is found at Lys209. Ser227 functions as the Acyl-ester intermediate in the catalytic mechanism. N-linked (GlcNAc...) asparagine glycosylation occurs at Asn275. A disulfide bridge connects residues Cys279 and Cys290. Lys296 carries the N6-succinyllysine modification. Glu344 functions as the Charge relay system in the catalytic mechanism. Residue Asn361 is glycosylated (N-linked (GlcNAc...) asparagine). The Charge relay system role is filled by His456.

This sequence belongs to the type-B carboxylesterase/lipase family.

The protein localises to the microsome. It carries out the reaction (-)-trans-permethrin + H2O = (3-phenoxyphenyl)methanol + (1S,3R)-3-(2,2-dichlorovinyl)-2,2-dimethylcyclopropanecarboxylate + H(+). It catalyses the reaction all-trans-retinyl hexadecanoate + H2O = all-trans-retinol + hexadecanoate + H(+). In terms of biological role, carboxylesterases that catalyzes the hydrolysis of pyrethroids pesticides. Hydrolyzes permethrin faster than cypermethrin. Hydrolyzes retinyl esters. This is Pyrethroid hydrolase Ces2a from Mus musculus (Mouse).